Here is a 517-residue protein sequence, read N- to C-terminus: GMP synthase [glutamine-hydrolyzing] (517 aa).

One can recognise a Glutamine amidotransferase type-1 domain in the interval 9-199 (RILILDFGSQ…VLGVCGCERL (191 aa)). Cys86 (nucleophile) is an active-site residue. Catalysis depends on residues His173 and Glu175. The region spanning 200–392 (WTSESIIEDA…LGLPYEMLYR (193 aa)) is the GMPS ATP-PPase domain. 227 to 233 (SGGVDSS) provides a ligand contact to ATP.

Homodimer.

The enzyme catalyses XMP + L-glutamine + ATP + H2O = GMP + L-glutamate + AMP + diphosphate + 2 H(+). It participates in purine metabolism; GMP biosynthesis; GMP from XMP (L-Gln route): step 1/1. In terms of biological role, catalyzes the synthesis of GMP from XMP. The protein is GMP synthase [glutamine-hydrolyzing] of Vibrio vulnificus (strain YJ016).